Consider the following 106-residue polypeptide: uncharacterized protein (106 aa).

The N-terminal stretch at methionine 1–serine 27 is a signal peptide. Residues threonine 42–phenylalanine 62 form a helical membrane-spanning segment.

The protein resides in the membrane. This is an uncharacterized protein from Saccharomyces cerevisiae (strain ATCC 204508 / S288c) (Baker's yeast).